A 94-amino-acid chain; its full sequence is Large ribosomal subunit protein bL25 (94 aa).

It belongs to the bacterial ribosomal protein bL25 family. As to quaternary structure, part of the 50S ribosomal subunit; part of the 5S rRNA/L5/L18/L25 subcomplex. Contacts the 5S rRNA. Binds to the 5S rRNA independently of L5 and L18.

This is one of the proteins that binds to the 5S RNA in the ribosome where it forms part of the central protuberance. The chain is Large ribosomal subunit protein bL25 from Klebsiella pneumoniae subsp. pneumoniae (strain ATCC 700721 / MGH 78578).